Here is a 49-residue protein sequence, read N- to C-terminus: Large ribosomal subunit protein eL40 (49 aa).

It belongs to the eukaryotic ribosomal protein eL40 family.

This is Large ribosomal subunit protein eL40 from Methanococcoides burtonii (strain DSM 6242 / NBRC 107633 / OCM 468 / ACE-M).